Here is a 615-residue protein sequence, read N- to C-terminus: NEDD8 ultimate buster 1 (615 aa).

2 coiled-coil regions span residues 36-70 and 152-203; these read LALKDLAKQYSDRLECCENEVEKVIEEIRCKAIER and KAMV…AAET. UBA domains are found at residues 374–413, 424–470, and 489–529; these read YIDPSKVDNLLQLGFTAQEARLGLRACDGNVDHAATHITN, EEKE…LLSN, and SPSQ…LAHN. Residues 414 to 431 carry the Nuclear localization signal motif; sequence RREELAQIRKEEKEKKRR. The segment at 427 to 474 is NEDD8-binding 1; that stretch reads EKKRRRLENIRFLKGMGYSTHAAQQVLHAASGNLDEALKILLSNPQMW. The segment at 532–586 is disordered; that stretch reads SLPPELPLSPEDSLSPPATSPSDSAGTSSASTDEDMETEAVNEILEDIPEHEEDY. The segment covering 539–562 has biased composition (low complexity); the sequence is LSPEDSLSPPATSPSDSAGTSSAS. Residues 550-598 form an NEDD8-binding 2 region; it reads TSPSDSAGTSSASTDEDMETEAVNEILEDIPEHEEDYLDSTLEDEEIII. Positions 563 to 586 are enriched in acidic residues; that stretch reads TDEDMETEAVNEILEDIPEHEEDY.

Directly interacts with NEDD8 and PSMD4/S5a, a member of the regulatory subunit of the 26S proteasome. Isoform 1 binds to NEDD8 more efficiently than isoform 2. Interacts with AIPL1. The interaction with UBD via UBA domains facilitates the linking of UBD-conjugated target protein to the proteasome complex and accelerates UBD degradation and that of its conjugates. In terms of tissue distribution, widely expressed with lowest expression in the pancreas for isoform 1 and in leukocytes, liver, prostate and skeletal muscle for isoform 2.

It localises to the nucleus. Specific down-regulator of the NEDD8 conjugation system. Recruits NEDD8, UBD, and their conjugates to the proteasome for degradation. Isoform 1 promotes the degradation of NEDD8 more efficiently than isoform 2. The sequence is that of NEDD8 ultimate buster 1 (NUB1) from Homo sapiens (Human).